Consider the following 505-residue polypeptide: Flagellin (505 aa).

Belongs to the bacterial flagellin family.

The protein localises to the secreted. The protein resides in the bacterial flagellum. In terms of biological role, flagellin is the subunit protein which polymerizes to form the filaments of bacterial flagella. In Salmonella senftenberg, this protein is Flagellin (fliC).